The sequence spans 313 residues: ADP-L-glycero-D-manno-heptose-6-epimerase (313 aa).

NADP(+) contacts are provided by residues 10–11, 31–32, K38, R53, 75–79, and N92; these read MI, DN, and EGACS. The Proton acceptor role is filled by Y139. Residue K143 participates in NADP(+) binding. N174 provides a ligand contact to substrate. 2 residues coordinate NADP(+): V175 and K183. The active-site Proton acceptor is K183. Substrate is bound by residues S185, H192, 206–209, R214, and Y277; that span reads FAGS.

Belongs to the NAD(P)-dependent epimerase/dehydratase family. HldD subfamily. As to quaternary structure, homopentamer. The cofactor is NADP(+).

It carries out the reaction ADP-D-glycero-beta-D-manno-heptose = ADP-L-glycero-beta-D-manno-heptose. It participates in nucleotide-sugar biosynthesis; ADP-L-glycero-beta-D-manno-heptose biosynthesis; ADP-L-glycero-beta-D-manno-heptose from D-glycero-beta-D-manno-heptose 7-phosphate: step 4/4. It functions in the pathway bacterial outer membrane biogenesis; LPS core biosynthesis. In terms of biological role, catalyzes the interconversion between ADP-D-glycero-beta-D-manno-heptose and ADP-L-glycero-beta-D-manno-heptose via an epimerization at carbon 6 of the heptose. This chain is ADP-L-glycero-D-manno-heptose-6-epimerase, found in Vibrio vulnificus (strain CMCP6).